We begin with the raw amino-acid sequence, 144 residues long: Ribosomal RNA large subunit methyltransferase H (144 aa).

S-adenosyl-L-methionine is bound by residues L63, G92, and 111-116; that span reads LSAMTL.

The protein belongs to the RNA methyltransferase RlmH family. Homodimer.

The protein localises to the cytoplasm. It catalyses the reaction pseudouridine(1915) in 23S rRNA + S-adenosyl-L-methionine = N(3)-methylpseudouridine(1915) in 23S rRNA + S-adenosyl-L-homocysteine + H(+). Its function is as follows. Specifically methylates the pseudouridine at position 1915 (m3Psi1915) in 23S rRNA. This Prochlorococcus marinus (strain MIT 9313) protein is Ribosomal RNA large subunit methyltransferase H.